Reading from the N-terminus, the 162-residue chain is 2-C-methyl-D-erythritol 2,4-cyclodiphosphate synthase (162 aa).

A divalent metal cation-binding residues include Asp-12 and His-14. Residues 12-14 (DVH) and 38-39 (HS) contribute to the 4-CDP-2-C-methyl-D-erythritol 2-phosphate site. Position 46 (His-46) interacts with a divalent metal cation. 4-CDP-2-C-methyl-D-erythritol 2-phosphate-binding positions include 60-62 (DIG), 65-69 (FPDTD), Phe-143, and Arg-146.

Belongs to the IspF family. As to quaternary structure, homotrimer. A divalent metal cation serves as cofactor.

The catalysed reaction is 4-CDP-2-C-methyl-D-erythritol 2-phosphate = 2-C-methyl-D-erythritol 2,4-cyclic diphosphate + CMP. It participates in isoprenoid biosynthesis; isopentenyl diphosphate biosynthesis via DXP pathway; isopentenyl diphosphate from 1-deoxy-D-xylulose 5-phosphate: step 4/6. Involved in the biosynthesis of isopentenyl diphosphate (IPP) and dimethylallyl diphosphate (DMAPP), two major building blocks of isoprenoid compounds. Catalyzes the conversion of 4-diphosphocytidyl-2-C-methyl-D-erythritol 2-phosphate (CDP-ME2P) to 2-C-methyl-D-erythritol 2,4-cyclodiphosphate (ME-CPP) with a corresponding release of cytidine 5-monophosphate (CMP). The chain is 2-C-methyl-D-erythritol 2,4-cyclodiphosphate synthase from Azoarcus sp. (strain BH72).